The sequence spans 228 residues: uncharacterized protein (228 aa).

Positions Met-1–Ala-23 are cleaved as a signal peptide.

This is an uncharacterized protein from Methylorubrum extorquens (strain ATCC 14718 / DSM 1338 / JCM 2805 / NCIMB 9133 / AM1) (Methylobacterium extorquens).